We begin with the raw amino-acid sequence, 253 residues long: 5'/3'-nucleotidase SurE (253 aa).

Residues Asp8, Asp9, Ser39, and Asn92 each contribute to the a divalent metal cation site.

It belongs to the SurE nucleotidase family. It depends on a divalent metal cation as a cofactor.

It is found in the cytoplasm. The enzyme catalyses a ribonucleoside 5'-phosphate + H2O = a ribonucleoside + phosphate. The catalysed reaction is a ribonucleoside 3'-phosphate + H2O = a ribonucleoside + phosphate. It carries out the reaction [phosphate](n) + H2O = [phosphate](n-1) + phosphate + H(+). In terms of biological role, nucleotidase with a broad substrate specificity as it can dephosphorylate various ribo- and deoxyribonucleoside 5'-monophosphates and ribonucleoside 3'-monophosphates with highest affinity to 3'-AMP. Also hydrolyzes polyphosphate (exopolyphosphatase activity) with the preference for short-chain-length substrates (P20-25). Might be involved in the regulation of dNTP and NTP pools, and in the turnover of 3'-mononucleotides produced by numerous intracellular RNases (T1, T2, and F) during the degradation of various RNAs. This Salmonella arizonae (strain ATCC BAA-731 / CDC346-86 / RSK2980) protein is 5'/3'-nucleotidase SurE.